A 124-amino-acid polypeptide reads, in one-letter code: Heat-labile enterotoxin B chain (124 aa).

Positions 1–21 are cleaved as a signal peptide; it reads MNKVKCYVLFTALLSSLYAHG. Cys30 and Cys107 are oxidised to a cystine.

As to quaternary structure, heterohexamer of one A chain and of five B chains.

Functionally, the biological activity of the toxin is produced by the A chain, which activates intracellular adenyl cyclase. The sequence is that of Heat-labile enterotoxin B chain (eltB) from Escherichia coli.